The sequence spans 515 residues: Bifunctional NAD(P)H-hydrate repair enzyme Nnr (515 aa).

The tract at residues 1 to 227 is NAD(P)H-hydrate epimerase; sequence MTDHTMKKNP…GLDSWLAGQE (227 aa). Residues 23 to 225 form the YjeF N-terminal domain; it reads IRRGEREAAD…SLGLDSWLAG (203 aa). An NADPHX 1; for epimerase activity region spans residues 71-75; the sequence is NNGGD. Residues N72 and D135 each contribute to the K(+) site. The NADPHX 1; for epimerase activity stretch occupies residues 139 to 145; sequence GTGLRQA. (6S)-NADPHX is bound at residue D168. K(+) is bound at residue S171. Residues 234–501 enclose the YjeF C-terminal domain; the sequence is SAEQLSHWLK…STLQRIVNPE (268 aa). Positions 235 to 515 are ADP-dependent (S)-NAD(P)H-hydrate dehydratase; the sequence is AEQLSHWLKP…NHDESSNSAP (281 aa). G329 lines the (6S)-NADPHX pocket. The NADPHX 2; for dehydratase activity stretch occupies residues 375–381; that stretch reads HPGEAAR. ADP is bound by residues 412 to 416 and 432 to 441; these read KGAGT and NAGMASGGMG. D442 serves as a coordination point for (6S)-NADPHX.

It in the N-terminal section; belongs to the NnrE/AIBP family. The protein in the C-terminal section; belongs to the NnrD/CARKD family. The cofactor is K(+).

It catalyses the reaction (6S)-NADHX + ADP = AMP + phosphate + NADH + H(+). It carries out the reaction (6S)-NADPHX + ADP = AMP + phosphate + NADPH + H(+). The catalysed reaction is (6R)-NADHX = (6S)-NADHX. The enzyme catalyses (6R)-NADPHX = (6S)-NADPHX. Functionally, bifunctional enzyme that catalyzes the epimerization of the S- and R-forms of NAD(P)HX and the dehydration of the S-form of NAD(P)HX at the expense of ADP, which is converted to AMP. This allows the repair of both epimers of NAD(P)HX, a damaged form of NAD(P)H that is a result of enzymatic or heat-dependent hydration. This chain is Bifunctional NAD(P)H-hydrate repair enzyme Nnr (nnr), found in Escherichia coli (strain K12).